The primary structure comprises 427 residues: Pectin acetylesterase 5 (427 aa).

The first 35 residues, 1–35, serve as a signal peptide directing secretion; it reads MAIPRFSSLLRCRKWAKSDWLVASIGCVLIVFFLS. Asn173 carries N-linked (GlcNAc...) asparagine glycosylation. Residues Ser209, Asp305, and His372 each act as charge relay system in the active site. N-linked (GlcNAc...) asparagine glycosylation is present at Asn391.

The protein belongs to the pectinacetylesterase family.

Its subcellular location is the secreted. It localises to the cell wall. In terms of biological role, hydrolyzes acetyl esters in homogalacturonan regions of pectin. In type I primary cell wall, galacturonic acid residues of pectin can be acetylated at the O-2 and O-3 positions. Decreasing the degree of acetylation of pectin gels in vitro alters their physical properties. The sequence is that of Pectin acetylesterase 5 from Arabidopsis thaliana (Mouse-ear cress).